Here is a 185-residue protein sequence, read N- to C-terminus: uncharacterized protein (185 aa).

4 consecutive transmembrane segments (helical) span residues 5–25, 63–83, 97–117, and 149–169; these read SFLI…RIWL, LATV…LILI, FLGL…VLLI, and IIPA…GLQF.

The protein belongs to the YggT family.

The protein resides in the cell membrane. This is an uncharacterized protein from Vibrio alginolyticus.